The primary structure comprises 123 residues: Large ribosomal subunit protein eL8 (123 aa).

The protein belongs to the eukaryotic ribosomal protein eL8 family. In terms of assembly, part of the 50S ribosomal subunit. Probably part of the RNase P complex.

Its subcellular location is the cytoplasm. Functionally, multifunctional RNA-binding protein that recognizes the K-turn motif in ribosomal RNA, the RNA component of RNase P, box H/ACA, box C/D and box C'/D' sRNAs. The chain is Large ribosomal subunit protein eL8 from Pyrococcus abyssi (strain GE5 / Orsay).